The following is a 344-amino-acid chain: Tripartite motif-containing protein 44 (344 aa).

The tract at residues 69-165 (PPASGDDALP…ETEAESEFDP (97 aa)) is disordered. Positions 88 to 165 (EGEVESEVGE…ETEAESEFDP (78 aa)) are enriched in acidic residues. The B box-type zinc-finger motif lies at 174–215 (VAKRKCPDHGLDLSTYCQEDRQLICVLCPVIGAHRGHQLSTL). Zn(2+)-binding residues include Cys-179, His-182, Cys-201, and His-207. A coiled-coil region spans residues 290 to 325 (AHVTEILADIQSHMDRLMTQMAQAKEQLDTSNESAE). Residues 309–344 (QMAQAKEQLDTSNESAEPKAEGDEEGPSGASEEEDT) form a disordered region. The segment covering 330–344 (GDEEGPSGASEEEDT) has biased composition (acidic residues). Phosphoserine is present on residues Ser-336 and Ser-339.

In terms of assembly, interacts (via coiled coil) with TRIM17 (via coiled coil).

May play a role in the process of differentiation and maturation of neuronal cells. May regulate the activity of TRIM17. Is a negative regulator of PAX6 expression. The polypeptide is Tripartite motif-containing protein 44 (Trim44) (Rattus norvegicus (Rat)).